Here is a 308-residue protein sequence, read N- to C-terminus: Methionyl-tRNA formyltransferase (308 aa).

109–112 (SLLP) is a (6S)-5,6,7,8-tetrahydrofolate binding site.

The protein belongs to the Fmt family.

The enzyme catalyses L-methionyl-tRNA(fMet) + (6R)-10-formyltetrahydrofolate = N-formyl-L-methionyl-tRNA(fMet) + (6S)-5,6,7,8-tetrahydrofolate + H(+). Attaches a formyl group to the free amino group of methionyl-tRNA(fMet). The formyl group appears to play a dual role in the initiator identity of N-formylmethionyl-tRNA by promoting its recognition by IF2 and preventing the misappropriation of this tRNA by the elongation apparatus. This Rhizorhabdus wittichii (strain DSM 6014 / CCUG 31198 / JCM 15750 / NBRC 105917 / EY 4224 / RW1) (Sphingomonas wittichii) protein is Methionyl-tRNA formyltransferase.